We begin with the raw amino-acid sequence, 242 residues long: UPF0073 membrane protein Rv1085c (242 aa).

The next 7 helical transmembrane spans lie at 42-62 (VYSAGTAVLAGASLVAVSWAV), 67-87 (AGLTTLAYTAATITMFTVSAT), 108-128 (SMIFVFIAGSYTPFALLALPA), 133-153 (VVLSIVWGGAIAGILLKMCWP), 159-179 (VGVPLYLLLGWVAVWYTATIL), 186-206 (ALVLLFVGGALYSIGGILYAV), and 222-242 (FHACTAVAAICHYIAMWFVVF).

The protein belongs to the UPF0073 (Hly-III) family.

The protein resides in the cell membrane. This is UPF0073 membrane protein Rv1085c from Mycobacterium tuberculosis (strain ATCC 25618 / H37Rv).